A 64-amino-acid polypeptide reads, in one-letter code: Conotoxin Tx3.5-a (64 aa).

The first 19 residues, 1 to 19 (MSKLGVLLTICLLLFPLTA), serve as a signal peptide directing secretion. Positions 20-47 (LPLDGDQPADQAAERMQAEQHPLFDQKR) are excised as a propeptide. 3 cysteine pairs are disulfide-bonded: C49-C58, C50-C62, and C54-C63. Residue C63 is modified to Cysteine amide.

This sequence belongs to the conotoxin M superfamily. In terms of processing, contains 3 disulfide bonds. Two peptides are produced from this precursor. Conotoxin Tx3.5-b is amidated at Cys-63, conotoxin Tx3.5-a has an unmodified C-terminus. In terms of tissue distribution, expressed by the venom duct. Is present in all duct parts with a highest content in part 2 (proximal of the venom bulb) and then decreases in concentration toward the end of the duct.

The protein localises to the secreted. This is Conotoxin Tx3.5-a from Conus textile (Cloth-of-gold cone).